Consider the following 212-residue polypeptide: uncharacterized protein (212 aa).

Residues glycine 53, glutamate 74, and aspartate 97 each coordinate S-adenosyl-L-methionine.

This sequence belongs to the methyltransferase superfamily. YrrT family.

Could be a S-adenosyl-L-methionine-dependent methyltransferase. This is an uncharacterized protein from Bacillus cereus (strain ATCC 10987 / NRS 248).